We begin with the raw amino-acid sequence, 307 residues long: Elongation factor Ts (307 aa).

An involved in Mg(2+) ion dislocation from EF-Tu region spans residues 80–83; the sequence is TDFV.

It belongs to the EF-Ts family.

Its subcellular location is the cytoplasm. Functionally, associates with the EF-Tu.GDP complex and induces the exchange of GDP to GTP. It remains bound to the aminoacyl-tRNA.EF-Tu.GTP complex up to the GTP hydrolysis stage on the ribosome. The polypeptide is Elongation factor Ts (Rhodospirillum centenum (strain ATCC 51521 / SW)).